We begin with the raw amino-acid sequence, 153 residues long: D-erythrulose-4-phosphate isomerase 1 (153 aa).

Cys-69 acts as the Proton acceptor in catalysis.

This sequence belongs to the LacAB/RpiB family.

The enzyme catalyses D-erythrulose 4-phosphate = D-erythrose 4-phosphate. The protein operates within carbohydrate metabolism; erythritol degradation. It participates in carbohydrate metabolism; D-threitol degradation. Its function is as follows. Catalyzes the isomerization of D-erythrulose-4P to D-erythrose-4P. Involved in the degradation pathways of erythritol and D-threitol, that allow M.smegmatis to grow on these compounds as the sole carbon source. The chain is D-erythrulose-4-phosphate isomerase 1 from Mycolicibacterium smegmatis (strain ATCC 700084 / mc(2)155) (Mycobacterium smegmatis).